We begin with the raw amino-acid sequence, 246 residues long: Protein DEHYDRATION-INDUCED 19 homolog 3 (246 aa).

A disordered region spans residues E185–D230. Positions S218–T229 are enriched in basic and acidic residues.

This sequence belongs to the Di19 family.

In Oryza sativa subsp. japonica (Rice), this protein is Protein DEHYDRATION-INDUCED 19 homolog 3 (DI19-3).